Consider the following 284-residue polypeptide: UPF0276 protein PA3283 (284 aa).

It belongs to the UPF0276 family.

The sequence is that of UPF0276 protein PA3283 from Pseudomonas aeruginosa (strain ATCC 15692 / DSM 22644 / CIP 104116 / JCM 14847 / LMG 12228 / 1C / PRS 101 / PAO1).